Here is a 231-residue protein sequence, read N- to C-terminus: Acyl-protein thioesterase 2 (231 aa).

Cys-2 carries the S-palmitoyl cysteine lipid modification. Position 82 is a phosphoserine (Ser-82). Residues Ser-122, Asp-176, and His-210 each act as charge relay system in the active site.

This sequence belongs to the AB hydrolase superfamily. AB hydrolase 2 family. Expressed in various breast cancer cell lines.

It localises to the cytoplasm. The enzyme catalyses S-hexadecanoyl-L-cysteinyl-[protein] + H2O = L-cysteinyl-[protein] + hexadecanoate + H(+). The catalysed reaction is prostaglandin E2 1-glyceryl ester + H2O = prostaglandin E2 + glycerol + H(+). It carries out the reaction 1-hexadecanoyl-sn-glycero-3-phosphocholine + H2O = sn-glycerol 3-phosphocholine + hexadecanoate + H(+). It catalyses the reaction 1-octadecanoyl-sn-glycero-3-phosphocholine + H2O = octadecanoate + sn-glycerol 3-phosphocholine + H(+). The enzyme catalyses 1-hexadecanoyl-sn-glycero-3-phosphate + H2O = sn-glycerol 3-phosphate + hexadecanoate + H(+). The catalysed reaction is 1-hexadecanoyl-sn-glycero-3-phospho-L-serine + H2O = sn-glycero-3-phospho-L-serine + hexadecanoate + H(+). Inhibited by compound 1 or (5,5-Dioxido-4H-thieno[3,2-c]thiochromen-2-yl)(4-(4-methoxyphenyl)piperazin-1-yl)methanone. Functionally, acts as an acyl-protein thioesterase hydrolyzing fatty acids from S-acylated cysteine residues in proteins such as trimeric G alpha proteins, GSDMD, GAP43, ZDHHC6 or HRAS. Deacylates GAP43. Mediates depalmitoylation of ZDHHC6. Has lysophospholipase activity. Hydrolyzes prostaglandin glycerol esters (PG-Gs) in the following order prostaglandin D2-glycerol ester (PGD2-G) &gt; prostaglandin E2 glycerol ester (PGE2-G) &gt; prostaglandin F2-alpha-glycerol ester (PGF2-alpha-G). Hydrolyzes 1-arachidonoylglycerol but not 2-arachidonoylglycerol or arachidonoylethanolamide. This chain is Acyl-protein thioesterase 2 (LYPLA2), found in Homo sapiens (Human).